Reading from the N-terminus, the 876-residue chain is Alanine--tRNA ligase (876 aa).

His-564, His-568, Cys-666, and His-670 together coordinate Zn(2+).

It belongs to the class-II aminoacyl-tRNA synthetase family. Homotetramer. It depends on Zn(2+) as a cofactor.

It localises to the cytoplasm. The catalysed reaction is tRNA(Ala) + L-alanine + ATP = L-alanyl-tRNA(Ala) + AMP + diphosphate. Its function is as follows. Catalyzes the attachment of alanine to tRNA(Ala) in a two-step reaction: alanine is first activated by ATP to form Ala-AMP and then transferred to the acceptor end of tRNA(Ala). Also edits incorrectly charged Ser-tRNA(Ala) and Gly-tRNA(Ala) via its editing domain. In Salmonella choleraesuis (strain SC-B67), this protein is Alanine--tRNA ligase.